Consider the following 701-residue polypeptide: Epithelial splicing regulatory protein 2 (701 aa).

RRM domains lie at 226-303, 327-407, and 448-523; these read TVIR…KATG, VIIR…RSTA, and CVRL…VEVF.

This sequence belongs to the ESRP family.

It is found in the nucleus. Functionally, mRNA splicing factor that regulates the formation of epithelial cell-specific isoforms. Specifically regulates the expression of FGFR2-IIIb, an epithelial cell-specific isoform of FGFR2. Acts by directly binding specific sequences in mRNAs. Binds the GU-rich sequence motifs in the ISE/ISS-3, a cis-element regulatory region present in the mRNA of FGFR2. This is Epithelial splicing regulatory protein 2 (ESRP2) from Gallus gallus (Chicken).